The sequence spans 215 residues: RWD domain-containing protein C1393.09c (215 aa).

The 108-residue stretch at 7–114 folds into the RWD domain; the sequence is EEREILESIY…SVAKEETNAI (108 aa).

It localises to the cytoplasm. Its subcellular location is the nucleus. This Schizosaccharomyces pombe (strain 972 / ATCC 24843) (Fission yeast) protein is RWD domain-containing protein C1393.09c.